The sequence spans 284 residues: Tropomyosin (284 aa).

A coiled-coil region spans residues 1 to 284 (MDAIKKKMLA…DQTFAELAGY (284 aa)). Over residues 202–213 (NNTKSLEISEQE) the composition is skewed to polar residues. Positions 202-223 (NNTKSLEISEQEASQREDSYEE) are disordered. The span at 214 to 223 (ASQREDSYEE) shows a compositional bias: basic and acidic residues.

Belongs to the tropomyosin family. As to quaternary structure, homodimer.

Functionally, tropomyosin, in association with the troponin complex, plays a central role in the calcium dependent regulation of muscle contraction. The chain is Tropomyosin from Haliotis rufescens (California red abalone).